The following is a 68-amino-acid chain: Small ribosomal subunit protein bS21 (68 aa).

The disordered stretch occupies residues 35-68 (HYEKPSEKRARERAAAVRRARKMERKRMERDGIK). The span at 37-49 (EKPSEKRARERAA) shows a compositional bias: basic and acidic residues. The span at 50–59 (AVRRARKMER) shows a compositional bias: basic residues.

Belongs to the bacterial ribosomal protein bS21 family.

This is Small ribosomal subunit protein bS21 from Sphingopyxis alaskensis (strain DSM 13593 / LMG 18877 / RB2256) (Sphingomonas alaskensis).